A 411-amino-acid polypeptide reads, in one-letter code: Citrate synthase (411 aa).

Active-site residues include histidine 304 and aspartate 363.

This sequence belongs to the citrate synthase family.

It catalyses the reaction oxaloacetate + acetyl-CoA + H2O = citrate + CoA + H(+). Its pathway is carbohydrate metabolism; tricarboxylic acid cycle; isocitrate from oxaloacetate: step 1/2. The chain is Citrate synthase (gltA) from Rickettsia canadensis.